Here is a 3535-residue protein sequence, read N- to C-terminus: Lysosomal-trafficking regulator (3535 aa).

Residues 412–436 (MESSASTAMPKQQQHPRHKRQRSSQ) form a disordered region. The WD 1 repeat unit spans residues 689–736 (TLSRRLIQLQLNSSDRASQLFQALLYKCSKHSRAKFWLDESSTPAKLE). The segment covering 1066 to 1096 (STHQEPTGVVNSPSGDSQQPRPRARSFNSGS) has biased composition (polar residues). 2 disordered regions span residues 1066–1132 (STHQ…NAGV) and 1592–1613 (GEGQ…TLDG). Low complexity predominate over residues 1596 to 1610 (PTGRSPGSSSSSRST). Positions 2686–2784 (SLNSQILYNF…MREVFCDKIV (99 aa)) constitute a BEACH-type PH domain. Residues 2784–3081 (VATPDQSKVI…QLFKSPHPAS (298 aa)) enclose the BEACH domain. The tract at residues 3254–3287 (GIGGGGSERVDEAGNLHPTSSASSVNSSSISSGG) is disordered. Low complexity predominate over residues 3273 to 3285 (SSASSVNSSSISS). WD repeat units follow at residues 3307 to 3346 (RHTD…YVRT), 3442 to 3486 (VHED…FVSE), and 3489 to 3527 (TGTS…GNAP).

In terms of assembly, interacts with Rab5; the interaction is independent of GDP or GTP. Interacts with msps.

It is found in the vesicle. It localises to the cytoplasm. The protein localises to the cytoskeleton. Its subcellular location is the spindle. The protein resides in the spindle pole. Functionally, adapter protein that regulates intracellular membrane fusion reactions. Regulates the fusion of lysosome-related organelles. Promotes microtubules nucleation and centrosomal recruitment of microtubule nucleating proteins such as msps. In syncytial embryos, during the formation of yolk granules, suppresses vesicle fusion events with lipid droplets, possibly via interaction with Rab5. In the eye, regulates pigment granules size. In hemocytes, required for the late steps of bacteria phagocytosis. In fat body, required for autophagosome maturation. The polypeptide is Lysosomal-trafficking regulator (Drosophila melanogaster (Fruit fly)).